The sequence spans 815 residues: Probable disease resistance protein At5g66910 (815 aa).

Residues 1 to 150 (MVVVDWLGLG…NINKKLDRLS (150 aa)) enclose the RPW8 domain. NB-ARC domains follow at residues 156–283 (PLVS…DVWQ) and 341–440 (SPDE…DIWM). 196–203 (GPPGCGKT) serves as a coordination point for ATP. 4 LRR repeats span residues 656 to 678 (NLQEIDIDYCYDLDELPYWIPEV), 680 to 702 (SLKTLSITNCNKLSQLPEAIGNL), 704 to 726 (RLEVLRMCSCMNLSELPEATERL), and 728 to 750 (NLRSLDISHCLGLRKLPQEIGKL).

It belongs to the disease resistance NB-LRR family.

In terms of biological role, probable disease resistance protein. This chain is Probable disease resistance protein At5g66910, found in Arabidopsis thaliana (Mouse-ear cress).